The following is a 201-amino-acid chain: Small ribosomal subunit protein uS4c (201 aa).

A disordered region spans residues 20–44 (GLTSKRPRAGSDLRNQSRSGKKSQY). The 64-residue stretch at 89-152 (MRLDNILFRL…NSRTLVQNLL (64 aa)) folds into the S4 RNA-binding domain.

Belongs to the universal ribosomal protein uS4 family. As to quaternary structure, part of the 30S ribosomal subunit. Contacts protein S5. The interaction surface between S4 and S5 is involved in control of translational fidelity.

It is found in the plastid. The protein localises to the chloroplast. In terms of biological role, one of the primary rRNA binding proteins, it binds directly to 16S rRNA where it nucleates assembly of the body of the 30S subunit. Its function is as follows. With S5 and S12 plays an important role in translational accuracy. This chain is Small ribosomal subunit protein uS4c (rps4), found in Aethionema cordifolium (Lebanon stonecress).